The primary structure comprises 314 residues: Hydroxyacyl-coenzyme A dehydrogenase, mitochondrial (314 aa).

The N-terminal 12 residues, 1–12 (MAFVTRQFVRSM), are a transit peptide targeting the mitochondrion. Residues 34-39 (GGGLMG) and D57 contribute to the NAD(+) site. S73 contributes to the CoA binding site. At K75 the chain carries N6-acetyllysine. K80 lines the CoA pocket. The residue at position 80 (K80) is an N6-succinyllysine. N6-acetyllysine; alternate is present on residues K81 and K87. K81 and K87 each carry N6-succinyllysine; alternate. E122 provides a ligand contact to NAD(+). An N6-acetyllysine modification is found at K125. Residue K127 participates in NAD(+) binding. K127 carries the post-translational modification N6-(2-hydroxyisobutyryl)lysine. K136 carries the post-translational modification N6-acetyllysine; alternate. N6-succinyllysine; alternate is present on K136. Residues S149 and N173 each contribute to the NAD(+) site. S149 provides a ligand contact to CoA. An N6-acetyllysine modification is found at K179. 3 positions are modified to N6-acetyllysine; alternate: K185, K192, and K202. An N6-succinyllysine; alternate mark is found at K185, K192, and K202. Position 206 is an N6-succinyllysine (K206). 2 positions are modified to N6-acetyllysine; alternate: K212 and K241. K212 and K241 each carry N6-succinyllysine; alternate. K305 serves as a coordination point for NAD(+). N6-acetyllysine; alternate is present on K312. K312 bears the N6-succinyllysine; alternate mark.

Belongs to the 3-hydroxyacyl-CoA dehydrogenase family. In terms of assembly, homodimer. Interacts with GLUD1; this interaction inhibits the activation of glutamate dehydrogenase 1 (GLUD1). In terms of processing, succinylation at Lys-81, adjacent to a coenzyme A binding site. Desuccinylated by SIRT5.

The protein resides in the mitochondrion matrix. The enzyme catalyses a (3S)-3-hydroxyacyl-CoA + NAD(+) = a 3-oxoacyl-CoA + NADH + H(+). The catalysed reaction is (3S)-3-hydroxybutanoyl-CoA + NAD(+) = acetoacetyl-CoA + NADH + H(+). It catalyses the reaction (3S)-hydroxydecanoyl-CoA + NAD(+) = 3-oxodecanoyl-CoA + NADH + H(+). It carries out the reaction (3S)-hydroxyhexadecanoyl-CoA + NAD(+) = 3-oxohexadecanoyl-CoA + NADH + H(+). It participates in lipid metabolism; fatty acid beta-oxidation. Its function is as follows. Mitochondrial fatty acid beta-oxidation enzyme that catalyzes the third step of the beta-oxidation cycle for medium and short-chain 3-hydroxy fatty acyl-CoAs (C4 to C10). Plays a role in the control of insulin secretion by inhibiting the activation of glutamate dehydrogenase 1 (GLUD1), an enzyme that has an important role in regulating amino acid-induced insulin secretion. Plays a role in the maintenance of normal spermatogenesis through the reduction of fatty acid accumulation in the testes. The sequence is that of Hydroxyacyl-coenzyme A dehydrogenase, mitochondrial (Hadh) from Rattus norvegicus (Rat).